The chain runs to 435 residues: Serine--tRNA ligase (435 aa).

241–243 (TAE) contacts L-serine. 272-274 (RAE) contributes to the ATP binding site. Position 295 (Glu295) interacts with L-serine. Residue 359 to 362 (EISS) coordinates ATP. Ser395 contacts L-serine.

The protein belongs to the class-II aminoacyl-tRNA synthetase family. Type-1 seryl-tRNA synthetase subfamily. As to quaternary structure, homodimer. The tRNA molecule binds across the dimer.

It localises to the cytoplasm. It catalyses the reaction tRNA(Ser) + L-serine + ATP = L-seryl-tRNA(Ser) + AMP + diphosphate + H(+). The catalysed reaction is tRNA(Sec) + L-serine + ATP = L-seryl-tRNA(Sec) + AMP + diphosphate + H(+). The protein operates within aminoacyl-tRNA biosynthesis; selenocysteinyl-tRNA(Sec) biosynthesis; L-seryl-tRNA(Sec) from L-serine and tRNA(Sec): step 1/1. Functionally, catalyzes the attachment of serine to tRNA(Ser). Is also able to aminoacylate tRNA(Sec) with serine, to form the misacylated tRNA L-seryl-tRNA(Sec), which will be further converted into selenocysteinyl-tRNA(Sec). This chain is Serine--tRNA ligase, found in Haemophilus ducreyi (strain 35000HP / ATCC 700724).